The primary structure comprises 209 residues: UPF0319 protein VF_1616 (209 aa).

The first 21 residues, 1-21, serve as a signal peptide directing secretion; the sequence is MKIQSIFAASFCLLSSISAHA.

The protein belongs to the UPF0319 family.

This chain is UPF0319 protein VF_1616, found in Aliivibrio fischeri (strain ATCC 700601 / ES114) (Vibrio fischeri).